A 488-amino-acid chain; its full sequence is Transmembrane protein 39A (488 aa).

2 N-linked (GlcNAc...) asparagine glycosylation sites follow: N31 and N39. 8 helical membrane passes run 72-92 (SLLF…IQYI), 110-130 (TSLN…VMLA), 154-174 (VLIS…CWTL), 182-202 (SVLN…LCCF), 287-307 (EVLF…LCFV), 319-339 (CEHL…QLLP), 420-440 (LLNL…YSLL), and 446-466 (NHTL…FKLL).

This sequence belongs to the TMEM39 family. Interacts with SACM1L, SEC23A and SEC24A.

It localises to the endoplasmic reticulum membrane. In terms of biological role, regulates autophagy by controlling the spatial distribution and levels of the intracellular phosphatidylinositol 4-phosphate (PtdIns(4)P) pools. Modulates (PtdIns(4)P) levels by regulating the ER-to-Golgi trafficking of the phosphatidylinositide phosphatase SACM1L. This chain is Transmembrane protein 39A (TMEM39A), found in Bos taurus (Bovine).